The chain runs to 250 residues: Isoprenyl transferase (250 aa).

Residue Asp-27 is part of the active site. Residue Asp-27 participates in Mg(2+) binding. Residues 28 to 31, Trp-32, His-48, and 76 to 78 contribute to the substrate site; these read GNRR and STE. Asn-79 serves as the catalytic Proton acceptor. Substrate contacts are provided by residues Phe-80, Arg-82, Arg-199, and 205–207; that span reads RVS. Glu-218 serves as a coordination point for Mg(2+).

Belongs to the UPP synthase family. As to quaternary structure, homodimer. The cofactor is Mg(2+).

Catalyzes the condensation of isopentenyl diphosphate (IPP) with allylic pyrophosphates generating different type of terpenoids. The chain is Isoprenyl transferase from Chlamydia abortus (strain DSM 27085 / S26/3) (Chlamydophila abortus).